We begin with the raw amino-acid sequence, 122 residues long: UPF0102 protein BQ09720 (122 aa).

This sequence belongs to the UPF0102 family.

The chain is UPF0102 protein BQ09720 from Bartonella quintana (strain Toulouse) (Rochalimaea quintana).